A 113-amino-acid chain; its full sequence is Chaperone protein SigE (113 aa).

Belongs to the IpgE/SigE chaperone family. As to quaternary structure, homodimer or higher-order oligomers.

The protein resides in the cytoplasm. Molecular chaperone required for SopB/SigD stabilization and secretion. In Salmonella typhi, this protein is Chaperone protein SigE (sigE).